The chain runs to 396 residues: Coiled-coil domain-containing protein 1 (396 aa).

A signal peptide spans 1–21 (MAARSALCFLAIITLFVYACG). 4 coiled-coil regions span residues 53–73 (KIDS…NDRD), 109–129 (EVEK…DIID), 208–242 (DKES…ILDT), and 287–308 (YEEI…IDEH). The segment covering 231–256 (DANDDVNDILDTDDEDEDEDVQEEKD) has biased composition (acidic residues). Disordered stretches follow at residues 231-260 (DAND…EDIH) and 288-378 (EEIE…VADD).

Component of the acid-insoluble and acid-soluble organic matrix of calcified layers of the shell (at protein level).

The protein resides in the secreted. The protein is Coiled-coil domain-containing protein 1 of Lottia gigantea (Giant owl limpet).